A 441-amino-acid chain; its full sequence is MQRFYVVKEVLSDKLKRVYEFTVGNEYLEQQVDDRLREIAANVRMDGFRKGKVSLDLVRRNCGEDVVREVLSKVVDDASSQFMQEGGFGDVVTSEVRITSHPKVCSTEGKGGDLVYELQFELMPEVPSINPEEIALKEMEAEIGQEDVDKFIGELKTRYPNFVASDSPKQRAAAGDKVVIDYNSSFKGKALRGGSAKGFVAVLGGGHLPKEFEDKITGMKVGDVKEFKLGFPSDYRVRLFAGKEVEMSVKLVSIMVPKDVGDHEELAKSCGFGCAEDMVNFATESLKGRFAFMSDALMRKELFDHMETIYQGQVPESVVSQESARIRRELAPSELEAMGEDGILKEAERRVRLGMLLMKVSQDNNIAVEARDISAFVQSNYLNYGASLESVLKLLRSNQGVRDHIRGKVLEDKVVRYMVAKAKKERQNVPAGDLKSLFESI.

Residues 175–260 form the PPIase FKBP-type domain; it reads GDKVVIDYNS…LVSIMVPKDV (86 aa).

This sequence belongs to the FKBP-type PPIase family. Tig subfamily.

It is found in the cytoplasm. It carries out the reaction [protein]-peptidylproline (omega=180) = [protein]-peptidylproline (omega=0). Its function is as follows. Involved in protein export. Acts as a chaperone by maintaining the newly synthesized protein in an open conformation. Functions as a peptidyl-prolyl cis-trans isomerase. The chain is Trigger factor from Anaplasma marginale (strain St. Maries).